Consider the following 484-residue polypeptide: Siroheme synthase 1 (484 aa).

The tract at residues 1 to 205 (MHHYPIFLKL…GREAEGEAEL (205 aa)) is precorrin-2 dehydrogenase /sirohydrochlorin ferrochelatase. NAD(+) is bound by residues 22 to 23 (EA) and 43 to 44 (PV). Ser130 bears the Phosphoserine mark. The interval 220-484 (GEVFLVGAGP…DPCWTGGMRD (265 aa)) is uroporphyrinogen-III C-methyltransferase. Pro229 is a binding site for S-adenosyl-L-methionine. Residue Asp252 is the Proton acceptor of the active site. The Proton donor role is filled by Lys274. S-adenosyl-L-methionine-binding positions include 305-307 (GGD), Leu310, 335-336 (SA), Met387, and Ala416.

This sequence in the N-terminal section; belongs to the precorrin-2 dehydrogenase / sirohydrochlorin ferrochelatase family. It in the C-terminal section; belongs to the precorrin methyltransferase family.

It catalyses the reaction uroporphyrinogen III + 2 S-adenosyl-L-methionine = precorrin-2 + 2 S-adenosyl-L-homocysteine + H(+). It carries out the reaction precorrin-2 + NAD(+) = sirohydrochlorin + NADH + 2 H(+). The catalysed reaction is siroheme + 2 H(+) = sirohydrochlorin + Fe(2+). It functions in the pathway cofactor biosynthesis; adenosylcobalamin biosynthesis; precorrin-2 from uroporphyrinogen III: step 1/1. The protein operates within cofactor biosynthesis; adenosylcobalamin biosynthesis; sirohydrochlorin from precorrin-2: step 1/1. Its pathway is porphyrin-containing compound metabolism; siroheme biosynthesis; precorrin-2 from uroporphyrinogen III: step 1/1. It participates in porphyrin-containing compound metabolism; siroheme biosynthesis; siroheme from sirohydrochlorin: step 1/1. It functions in the pathway porphyrin-containing compound metabolism; siroheme biosynthesis; sirohydrochlorin from precorrin-2: step 1/1. In terms of biological role, multifunctional enzyme that catalyzes the SAM-dependent methylations of uroporphyrinogen III at position C-2 and C-7 to form precorrin-2 via precorrin-1. Then it catalyzes the NAD-dependent ring dehydrogenation of precorrin-2 to yield sirohydrochlorin. Finally, it catalyzes the ferrochelation of sirohydrochlorin to yield siroheme. The protein is Siroheme synthase 1 of Halorhodospira halophila (strain DSM 244 / SL1) (Ectothiorhodospira halophila (strain DSM 244 / SL1)).